Reading from the N-terminus, the 878-residue chain is Pyruvate dehydrogenase phosphatase regulatory subunit, mitochondrial (878 aa).

The N-terminal 93 residues, 1 to 93, are a transit peptide targeting the mitochondrion; that stretch reads MLYRLLSIVQ…CAGILSTARH (93 aa).

Belongs to the GcvT family. As to quaternary structure, heterodimer of a catalytic (PDP1) and a regulatory (PDPR) subunit.

It localises to the mitochondrion matrix. Functionally, decreases the sensitivity of PDP1 to magnesium ions, and this inhibition is reversed by the polyamine spermine. This chain is Pyruvate dehydrogenase phosphatase regulatory subunit, mitochondrial (Pdpr), found in Mus musculus (Mouse).